The primary structure comprises 188 residues: Probable manganese efflux pump MntP (188 aa).

The next 5 helical transmembrane spans lie at 3 to 23, 66 to 86, 106 to 128, 143 to 163, and 168 to 188; these read ITATVLLAFGMSMDAFAASIG, LEWNHWIAFVLLIFLGGRMII, WLLVTTAIATSLDAMAVGVGLAF, ATLIMSTLGMMVGRFIGPILG, and ILGGLVLIGIGVQILWTHFHG.

Belongs to the MntP (TC 9.B.29) family.

The protein resides in the cell inner membrane. Probably functions as a manganese efflux pump. This is Probable manganese efflux pump MntP from Escherichia fergusonii (strain ATCC 35469 / DSM 13698 / CCUG 18766 / IAM 14443 / JCM 21226 / LMG 7866 / NBRC 102419 / NCTC 12128 / CDC 0568-73).